Reading from the N-terminus, the 234-residue chain is MTNQLIYTGKAKDIYSTKDENVIRTVYKDQATMLNGARKETIDGKGALNNQISSLIFEKLNMAGVVTHYIEQISKNEQLNKKVDIIPLEVVLRNVTAGSFSKRFGVEEGHVLETPIVEFYYKNDNLNDPFINDEHVKFLGIVNDEEIAYLKGETRHINELLKDWFAQIGLNLIDFKLEFGFDKDGKIILADEFSPDNCRLWDADGNHMDKDVFRRDLGSLTDVYQVVLEKLIAL.

It belongs to the SAICAR synthetase family.

The catalysed reaction is 5-amino-1-(5-phospho-D-ribosyl)imidazole-4-carboxylate + L-aspartate + ATP = (2S)-2-[5-amino-1-(5-phospho-beta-D-ribosyl)imidazole-4-carboxamido]succinate + ADP + phosphate + 2 H(+). Its pathway is purine metabolism; IMP biosynthesis via de novo pathway; 5-amino-1-(5-phospho-D-ribosyl)imidazole-4-carboxamide from 5-amino-1-(5-phospho-D-ribosyl)imidazole-4-carboxylate: step 1/2. The chain is Phosphoribosylaminoimidazole-succinocarboxamide synthase from Streptococcus agalactiae serotype V (strain ATCC BAA-611 / 2603 V/R).